The chain runs to 619 residues: Translation initiation factor IF-2 (619 aa).

2 stretches are compositionally biased toward low complexity: residues methionine 1 to lysine 18 and proline 98 to threonine 111. 2 disordered regions span residues methionine 1–aspartate 24 and serine 90–proline 113. The tr-type G domain occupies lysine 121–leucine 289. Residues glycine 130–threonine 137 form a G1 region. Glycine 130–threonine 137 lines the GTP pocket. Positions glycine 155 to histidine 159 are G2. A G3 region spans residues aspartate 176–glycine 179. GTP contacts are provided by residues aspartate 176 to histidine 180 and asparagine 230 to aspartate 233. Residues asparagine 230–aspartate 233 form a G4 region. The tract at residues serine 266–leucine 268 is G5.

Belongs to the TRAFAC class translation factor GTPase superfamily. Classic translation factor GTPase family. IF-2 subfamily.

Its subcellular location is the cytoplasm. Functionally, one of the essential components for the initiation of protein synthesis. Protects formylmethionyl-tRNA from spontaneous hydrolysis and promotes its binding to the 30S ribosomal subunits. Also involved in the hydrolysis of GTP during the formation of the 70S ribosomal complex. This chain is Translation initiation factor IF-2, found in Onion yellows phytoplasma (strain OY-M).